The chain runs to 757 residues: Xaa-Pro dipeptidyl-peptidase (757 aa).

Active-site charge relay system residues include serine 348, aspartate 468, and histidine 498.

Belongs to the peptidase S15 family. As to quaternary structure, homodimer.

It localises to the cytoplasm. The catalysed reaction is Hydrolyzes Xaa-Pro-|- bonds to release unblocked, N-terminal dipeptides from substrates including Ala-Pro-|-p-nitroanilide and (sequentially) Tyr-Pro-|-Phe-Pro-|-Gly-Pro-|-Ile.. Its function is as follows. Removes N-terminal dipeptides sequentially from polypeptides having unsubstituted N-termini provided that the penultimate residue is proline. This is Xaa-Pro dipeptidyl-peptidase from Streptococcus pneumoniae (strain ATCC BAA-255 / R6).